Consider the following 220-residue polypeptide: Charged multivesicular body protein 2a (220 aa).

Residues 12-53 (EEMLRQNQRALNRAMRDLDRERQRLEQQEKKIIADIKKMAKQ) adopt a coiled-coil conformation. The tract at residues 184–220 (ATGGSLSVAAGKKAEPQPTLADADADLEERLNNLRRD) is disordered. Positions 208–218 (ADLEERLNNLR) match the MIT-interacting motif motif. Residues 211 to 220 (EERLNNLRRD) are compositionally biased toward basic and acidic residues.

This sequence belongs to the SNF7 family. As to quaternary structure, probable core component of the endosomal sorting required for transport complex III (ESCRT-III). ESCRT-III components are thought to multimerize to form a flat lattice on the perimeter membrane of the endosome.

It localises to the late endosome membrane. The protein localises to the cytoplasm. Probable core component of the endosomal sorting required for transport complex III (ESCRT-III) which is involved in multivesicular bodies (MVBs) formation and sorting of endosomal cargo proteins into MVBs. MVBs contain intraluminal vesicles (ILVs) that are generated by invagination and scission from the limiting membrane of the endosome and mostly are delivered to lysosomes enabling degradation of membrane proteins, such as stimulated growth factor receptors, lysosomal enzymes and lipids. In Danio rerio (Zebrafish), this protein is Charged multivesicular body protein 2a (chmp2a).